We begin with the raw amino-acid sequence, 93 residues long: Pyrimidine/purine nucleoside phosphorylase (93 aa).

It belongs to the nucleoside phosphorylase PpnP family.

The catalysed reaction is a purine D-ribonucleoside + phosphate = a purine nucleobase + alpha-D-ribose 1-phosphate. It catalyses the reaction adenosine + phosphate = alpha-D-ribose 1-phosphate + adenine. The enzyme catalyses cytidine + phosphate = cytosine + alpha-D-ribose 1-phosphate. It carries out the reaction guanosine + phosphate = alpha-D-ribose 1-phosphate + guanine. The catalysed reaction is inosine + phosphate = alpha-D-ribose 1-phosphate + hypoxanthine. It catalyses the reaction thymidine + phosphate = 2-deoxy-alpha-D-ribose 1-phosphate + thymine. The enzyme catalyses uridine + phosphate = alpha-D-ribose 1-phosphate + uracil. It carries out the reaction xanthosine + phosphate = alpha-D-ribose 1-phosphate + xanthine. Catalyzes the phosphorolysis of diverse nucleosides, yielding D-ribose 1-phosphate and the respective free bases. Can use uridine, adenosine, guanosine, cytidine, thymidine, inosine and xanthosine as substrates. Also catalyzes the reverse reactions. This Aliivibrio salmonicida (strain LFI1238) (Vibrio salmonicida (strain LFI1238)) protein is Pyrimidine/purine nucleoside phosphorylase.